Here is a 476-residue protein sequence, read N- to C-terminus: Ribulose bisphosphate carboxylase large chain (476 aa).

Residues Met-1–Ser-2 constitute a propeptide that is removed on maturation. Pro-3 carries the post-translational modification N-acetylproline. Residue Lys-14 is modified to N6,N6,N6-trimethyllysine. The substrate site is built by Asn-123 and Thr-173. Catalysis depends on Lys-175, which acts as the Proton acceptor. Lys-177 provides a ligand contact to substrate. 3 residues coordinate Mg(2+): Lys-201, Asp-203, and Glu-204. Lys-201 carries the N6-carboxylysine modification. His-294 functions as the Proton acceptor in the catalytic mechanism. The substrate site is built by Arg-295, His-327, and Ser-379.

The protein belongs to the RuBisCO large chain family. Type I subfamily. In terms of assembly, heterohexadecamer of 8 large chains and 8 small chains; disulfide-linked. The disulfide link is formed within the large subunit homodimers. Mg(2+) serves as cofactor. The disulfide bond which can form in the large chain dimeric partners within the hexadecamer appears to be associated with oxidative stress and protein turnover.

It localises to the plastid. Its subcellular location is the chloroplast. The enzyme catalyses 2 (2R)-3-phosphoglycerate + 2 H(+) = D-ribulose 1,5-bisphosphate + CO2 + H2O. It carries out the reaction D-ribulose 1,5-bisphosphate + O2 = 2-phosphoglycolate + (2R)-3-phosphoglycerate + 2 H(+). Functionally, ruBisCO catalyzes two reactions: the carboxylation of D-ribulose 1,5-bisphosphate, the primary event in carbon dioxide fixation, as well as the oxidative fragmentation of the pentose substrate in the photorespiration process. Both reactions occur simultaneously and in competition at the same active site. This chain is Ribulose bisphosphate carboxylase large chain, found in Arenaria drummondii (Drummond sandwort).